We begin with the raw amino-acid sequence, 271 residues long: MNRIKQTFAALAEQGRKGLIPFITAGDPDPAKTVEFMHALAAGGADVIELGVPFSDPMADGPVIQRSSERALARGVTLKSVLADVKRFRETDPKTPVVLMGYANPIERMGVDAFAAEAHAAGVDGVLVVDYPPEEAGVFAEKMRAAQIDPIFLLAPTSTDERIADVGKIASGYVYYVSLKGVTGAGNLDVSSIAGKIPAIKSRVPVPVGVGFGIRDAETARAVAEVSDAVVIGSRLVQLLESAAPEGAAAALKTFIAELRAALDGAGNTAR.

Catalysis depends on proton acceptor residues E49 and D60.

The protein belongs to the TrpA family. In terms of assembly, tetramer of two alpha and two beta chains.

It catalyses the reaction (1S,2R)-1-C-(indol-3-yl)glycerol 3-phosphate + L-serine = D-glyceraldehyde 3-phosphate + L-tryptophan + H2O. Its pathway is amino-acid biosynthesis; L-tryptophan biosynthesis; L-tryptophan from chorismate: step 5/5. The alpha subunit is responsible for the aldol cleavage of indoleglycerol phosphate to indole and glyceraldehyde 3-phosphate. This is Tryptophan synthase alpha chain from Burkholderia cenocepacia (strain HI2424).